A 62-amino-acid polypeptide reads, in one-letter code: Ponericin-W-like 32.2 (62 aa).

A signal peptide spans Met-1–Ala-23. Positions Arg-49–Pro-62 are excised as a propeptide.

It belongs to the non-disulfide-bridged peptide (NDBP) superfamily. Medium-length antimicrobial peptide (group 3) family. Ponericin-W subfamily. Expressed by the venom gland.

The protein localises to the secreted. It localises to the target cell membrane. Its function is as follows. Antimicrobial peptide with potent activity against a range of Gram-positive and Gram-negative bacteria. Has high hemolytic activity against erythrocytes. May act by disrupting the integrity of the bacterial cell membrane. The sequence is that of Ponericin-W-like 32.2 from Lychas mucronatus (Chinese swimming scorpion).